The primary structure comprises 497 residues: Hexokinase-1 (497 aa).

The chain crosses the membrane as a helical span at residues 4-24 (ATVGAAVIGAATVCAVAALIV). The region spanning 35 to 487 (ARAMAILREF…SGIGAALLAA (453 aa)) is the Hexokinase domain. The interval 90–228 (TGDEAGVFYA…GVDMRVSALV (139 aa)) is hexokinase small subdomain. ADP contacts are provided by Gly104, Thr105, and Asn106. D-glucose-binding residues include Thr194, Lys195, Asn229, and Asp230. The segment at 229 to 476 (NDTVGTLAGG…TSIVFEHSND (248 aa)) is hexokinase large subdomain. Thr253 is a binding site for ADP. 3 residues coordinate D-glucose: Asn256, Glu284, and Glu315. Gly441 lines the ADP pocket.

It belongs to the hexokinase family.

The protein localises to the plastid. Its subcellular location is the chloroplast outer membrane. The enzyme catalyses a D-hexose + ATP = a D-hexose 6-phosphate + ADP + H(+). It carries out the reaction D-fructose + ATP = D-fructose 6-phosphate + ADP + H(+). The catalysed reaction is D-glucose + ATP = D-glucose 6-phosphate + ADP + H(+). It functions in the pathway carbohydrate metabolism; hexose metabolism. It participates in carbohydrate degradation; glycolysis; D-glyceraldehyde 3-phosphate and glycerone phosphate from D-glucose: step 1/4. Its function is as follows. Fructose and glucose phosphorylating enzyme. The polypeptide is Hexokinase-1 (HXK1) (Nicotiana tabacum (Common tobacco)).